The sequence spans 74 residues: Probable tetrachloroethene reductive dehalogenase membrane anchor protein (74 aa).

Helical transmembrane passes span A11–G31 and A40–M60.

The protein belongs to the PceB family.

The protein localises to the cell inner membrane. Functionally, may act as a membrane anchor for the tetrachloroethene reductive dehalogenase PceA. The polypeptide is Probable tetrachloroethene reductive dehalogenase membrane anchor protein (Sulfurospirillum multivorans (Dehalospirillum multivorans)).